We begin with the raw amino-acid sequence, 255 residues long: Acetylglutamate kinase (255 aa).

Residues 40 to 41, R62, and N153 each bind substrate; that span reads GG.

Belongs to the acetylglutamate kinase family. ArgB subfamily.

The protein resides in the cytoplasm. The enzyme catalyses N-acetyl-L-glutamate + ATP = N-acetyl-L-glutamyl 5-phosphate + ADP. It participates in amino-acid biosynthesis; L-arginine biosynthesis; N(2)-acetyl-L-ornithine from L-glutamate: step 2/4. In terms of biological role, catalyzes the ATP-dependent phosphorylation of N-acetyl-L-glutamate. In Bacillus anthracis (strain CDC 684 / NRRL 3495), this protein is Acetylglutamate kinase.